Here is a 608-residue protein sequence, read N- to C-terminus: 2',5'-phosphodiesterase 12 (608 aa).

The N-terminal 16 residues, 1 to 16 (MWRLPGRSALRGVRSV), are a transit peptide targeting the mitochondrion. Basic residues predominate over residues 90 to 99 (AAKKSRKNRA). Residues 90–111 (AAKKSRKNRAHSSGGAACEATG) form a disordered region. S216 is modified (phosphoserine). 3 residues coordinate Mg(2+): E350, D495, and N497. The active-site Proton donor/acceptor is D495.

The protein belongs to the CCR4/nocturin family. It depends on Mg(2+) as a cofactor.

The protein localises to the mitochondrion matrix. The catalysed reaction is Exonucleolytic cleavage of poly(A) to 5'-AMP.. Its function is as follows. Enzyme that cleaves 2',5'-phosphodiester bond linking adenosines of the 5'-triphosphorylated oligoadenylates, triphosphorylated oligoadenylates referred as 2-5A modulates the 2-5A system. Degrades triphosphorylated 2-5A to produce AMP and ATP. Also cleaves 3',5'-phosphodiester bond of oligoadenylates. Plays a role as a negative regulator of the 2-5A system that is one of the major pathways for antiviral and antitumor functions induced by interferons (IFNs). Suppression of this enzyme increases cellular 2-5A levels and decreases viral replication in cultured small-airway epithelial cells. In Mus musculus (Mouse), this protein is 2',5'-phosphodiesterase 12 (Pde12).